We begin with the raw amino-acid sequence, 251 residues long: Probable transcriptional regulatory protein CT1665 (251 aa).

Belongs to the TACO1 family.

It localises to the cytoplasm. The sequence is that of Probable transcriptional regulatory protein CT1665 from Chlorobaculum tepidum (strain ATCC 49652 / DSM 12025 / NBRC 103806 / TLS) (Chlorobium tepidum).